A 123-amino-acid chain; its full sequence is Small ribosomal subunit protein uS13 (123 aa).

Basic residues predominate over residues 99–113 (RGQRTHTNARTRKGG). Positions 99-123 (RGQRTHTNARTRKGGSRLAVAAKKK) are disordered.

This sequence belongs to the universal ribosomal protein uS13 family. As to quaternary structure, part of the 30S ribosomal subunit. Forms a loose heterodimer with protein S19. Forms two bridges to the 50S subunit in the 70S ribosome.

Located at the top of the head of the 30S subunit, it contacts several helices of the 16S rRNA. In the 70S ribosome it contacts the 23S rRNA (bridge B1a) and protein L5 of the 50S subunit (bridge B1b), connecting the 2 subunits; these bridges are implicated in subunit movement. Contacts the tRNAs in the A and P-sites. The polypeptide is Small ribosomal subunit protein uS13 (Anaplasma phagocytophilum (strain HZ)).